Reading from the N-terminus, the 376-residue chain is Flagellin B (376 aa).

Residues Ser103–Thr130 are a coiled coil.

It belongs to the bacterial flagellin family. Heteromer of multiple flagellin subunits including FlaA, FlaB, FlaC, FlaD and possibly FlaE.

It is found in the secreted. The protein localises to the bacterial flagellum. Its function is as follows. Flagellin is the subunit protein which polymerizes to form the filaments of bacterial flagella. FlaB is not essential for flagellar synthesis and motility. The sequence is that of Flagellin B (flaB) from Vibrio anguillarum (Listonella anguillarum).